A 220-amino-acid polypeptide reads, in one-letter code: Putative cobalt transport protein CbiM (220 aa).

Helical transmembrane passes span 6–26, 43–63, 74–94, 98–118, and 182–202; these read GFLP…IVVY, ALVA…FPSV, GLLV…IVLL, LLLA…MGII, and IFTL…AAVI.

The protein belongs to the CbiM family. In terms of assembly, forms an energy-coupling factor (ECF) transporter complex composed of an ATP-binding protein (A component, CbiO), a transmembrane protein (T component, CbiQ) and 2 possible substrate-capture proteins (S components, CbiM and CbiN) of unknown stoichimetry.

The protein localises to the cell membrane. Its pathway is cofactor biosynthesis; adenosylcobalamin biosynthesis. In terms of biological role, part of the energy-coupling factor (ECF) transporter complex CbiMNOQ involved in cobalt import. The sequence is that of Putative cobalt transport protein CbiM from Haloquadratum walsbyi (strain DSM 16790 / HBSQ001).